The sequence spans 2168 residues: Genome polyprotein (2168 aa).

The disordered stretch occupies residues 1–20 (MGMQMSKNTAGSHTTVTQAS). G2 carries N-myristoyl glycine; by host lipidation. The Cytoplasmic segment spans residues 2–1479 (GMQMSKNTAG…NVSIATTILS (1478 aa)). 2 amphipathic alpha-helix regions span residues 551–567 (ALQA…ISSV) and 554–575 (APVE…TAQD). Over residues 576-589 (TQPSSHNISTSETP) the composition is skewed to polar residues. The interval 576 to 607 (TQPSSHNISTSETPALQAAETGASSNASDEGM) is disordered. Active-site for protease 2A activity residues include H856 and D874. Positions 891 and 893 each coordinate Zn(2+). C945 serves as the catalytic For protease 2A activity. The Zn(2+) site is built by C951 and H953. A membrane-binding region spans residues 1085–1157 (GDDWLKKFTS…EHSCPTTEQQ (73 aa)). Residues 1085–1223 (GDDWLKKFTS…TAGTGKSLAT (139 aa)) are oligomerization. An RNA-binding region spans residues 1106–1110 (AEKIM). Residues 1189–1347 (EKRILGYIQF…YKTHNGTLDV (159 aa)) form the SF3 helicase domain. Zn(2+) contacts are provided by C1354, C1365, and C1370. The C4-type; degenerate zinc-finger motif lies at 1354–1370 (CEDCCPANFKTCMPLIC). The segment at 1397-1404 (EWKRRNQV) is RNA-binding. An oligomerization region spans residues 1408 to 1413 (YVRLFQ). Residues 1480 to 1495 (SLVLLTSVITLVYLVY) lie within the membrane without spanning it. At 1496–2168 (RLFAGYQGPY…SLLREWYEKF (673 aa)) the chain is on the cytoplasmic side. O-(5'-phospho-RNA)-tyrosine is present on Y1505. Residues 1525–1703 (GPLMDFGVGM…FCAALKRSYF (179 aa)) enclose the Peptidase C3 domain. Catalysis depends on for protease 3C activity residues H1564, E1595, and C1671. Residues 1934–2048 (GELFGFDYTA…ASYPYRIDPA (115 aa)) form the RdRp catalytic domain. 2 residues coordinate Mg(2+): D1940 and D2035.

It belongs to the picornaviruses polyprotein family. As to quaternary structure, interacts with capsid protein VP1 and capsid protein VP3 to form heterotrimeric protomers. Interacts with capsid protein VP0, and capsid protein VP3 to form heterotrimeric protomers. Five protomers subsequently associate to form pentamers which serve as building blocks for the capsid. Interacts with capsid protein VP2, capsid protein VP3 and capsid protein VP4 following cleavage of capsid protein VP0. In terms of assembly, interacts with capsid protein VP1 and capsid protein VP3 in the mature capsid. As to quaternary structure, interacts with capsid protein VP0 and capsid protein VP1 to form heterotrimeric protomers. Five protomers subsequently associate to form pentamers which serve as building blocks for the capsid. Interacts with capsid protein VP4 in the mature capsid. Interacts with protein 2C; this interaction may be important for virion morphogenesis. Interacts with capsid protein VP1 and capsid protein VP3. In terms of assembly, homodimer. As to quaternary structure, homohexamer; forms a hexameric ring structure with 6-fold symmetry characteristic of AAA+ ATPases. Interacts (via N-terminus) with host RTN3 (via reticulon domain); this interaction is important for viral replication. Interacts with capsid protein VP3; this interaction may be important for virion morphogenesis. Interacts with protein 3CD. In terms of assembly, homodimer. Interacts with host GBF1. Interacts (via GOLD domain) with host ACBD3 (via GOLD domain); this interaction allows the formation of a viral protein 3A/ACBD3 heterotetramer with a 2:2 stoichiometry, which will stimulate the recruitment of host PI4KB in order to synthesize PI4P at the viral RNA replication sites. As to quaternary structure, interacts with RNA-directed RNA polymerase. Interacts with protein 3AB and with RNA-directed RNA polymerase. In terms of assembly, interacts with Viral protein genome-linked and with protein 3CD. Requires Mg(2+) as cofactor. Post-translationally, specific enzymatic cleavages in vivo by the viral proteases yield processing intermediates and the mature proteins. In terms of processing, myristoylation is required for the formation of pentamers during virus assembly. Further assembly of 12 pentamers and a molecule of genomic RNA generates the provirion. During virion maturation, immature virions are rendered infectious following cleavage of VP0 into VP4 and VP2. This maturation seems to be an autocatalytic event triggered by the presence of RNA in the capsid and it is followed by a conformational change infectious virion. Post-translationally, myristoylation is required during RNA encapsidation and formation of the mature virus particle. In terms of processing, VPg is uridylylated by the polymerase into VPg-pUpU. This acts as a nucleotide-peptide primer for the genomic RNA replication.

Its subcellular location is the virion. The protein localises to the host cytoplasm. It is found in the host cytoplasmic vesicle membrane. It localises to the host nucleus. The enzyme catalyses a ribonucleoside 5'-triphosphate + H2O = a ribonucleoside 5'-diphosphate + phosphate + H(+). It catalyses the reaction Selective cleavage of Tyr-|-Gly bond in the picornavirus polyprotein.. The catalysed reaction is RNA(n) + a ribonucleoside 5'-triphosphate = RNA(n+1) + diphosphate. It carries out the reaction Selective cleavage of Gln-|-Gly bond in the poliovirus polyprotein. In other picornavirus reactions Glu may be substituted for Gln, and Ser or Thr for Gly.. With respect to regulation, replication or transcription is subject to high level of random mutations by the nucleotide analog ribavirin. Its function is as follows. Forms an icosahedral capsid of pseudo T=3 symmetry with capsid proteins VP2 and VP3. The capsid is 300 Angstroms in diameter, composed of 60 copies of each capsid protein and enclosing the viral positive strand RNA genome. Capsid protein VP1 mainly forms the vertices of the capsid. Capsid protein VP1 interacts with host cell receptor to provide virion attachment to target host cells. This attachment induces virion internalization. Tyrosine kinases are probably involved in the entry process. After binding to its receptor, the capsid undergoes conformational changes. Capsid protein VP1 N-terminus (that contains an amphipathic alpha-helix) and capsid protein VP4 are externalized. Together, they shape a pore in the host membrane through which viral genome is translocated to host cell cytoplasm. Functionally, forms an icosahedral capsid of pseudo T=3 symmetry with capsid proteins VP2 and VP3. The capsid is 300 Angstroms in diameter, composed of 60 copies of each capsid protein and enclosing the viral positive strand RNA genome. In terms of biological role, lies on the inner surface of the capsid shell. After binding to the host receptor, the capsid undergoes conformational changes. Capsid protein VP4 is released, Capsid protein VP1 N-terminus is externalized, and together, they shape a pore in the host membrane through which the viral genome is translocated into the host cell cytoplasm. Component of immature procapsids, which is cleaved into capsid proteins VP4 and VP2 after maturation. Allows the capsid to remain inactive before the maturation step. Its function is as follows. Cysteine protease that cleaves viral polyprotein and specific host proteins. It is responsible for the autocatalytic cleavage between the P1 and P2 regions, which is the first cleavage occurring in the polyprotein. Also cleaves the host translation initiation factor EIF4G1, in order to shut down the capped cellular mRNA translation. Inhibits the host nucleus-cytoplasm protein and RNA trafficking by cleaving host members of the nuclear pores. Counteracts stress granule formation probably by antagonizing its assembly or promoting its dissassembly. Functionally, plays an essential role in the virus replication cycle by acting as a viroporin. Creates a pore in the host endoplasmic reticulum and as a consequence releases Ca2+ in the cytoplasm of infected cell. In turn, high levels of cytoplasmic calcium may trigger membrane trafficking and transport of viral ER-associated proteins to viroplasms, sites of viral genome replication. In terms of biological role, induces and associates with structural rearrangements of intracellular membranes. Displays RNA-binding, nucleotide binding and NTPase activities. May play a role in virion morphogenesis and viral RNA encapsidation by interacting with the capsid protein VP3. Localizes the viral replication complex to the surface of membranous vesicles. Together with protein 3CD binds the Cis-Active RNA Element (CRE) which is involved in RNA synthesis initiation. Acts as a cofactor to stimulate the activity of 3D polymerase, maybe through a nucleid acid chaperone activity. Its function is as follows. Localizes the viral replication complex to the surface of membranous vesicles. It inhibits host cell endoplasmic reticulum-to-Golgi apparatus transport and causes the disassembly of the Golgi complex, possibly through GBF1 interaction. This would result in depletion of MHC, trail receptors and IFN receptors at the host cell surface. Plays an essential role in viral RNA replication by recruiting ACBD3 and PI4KB at the viral replication sites, thereby allowing the formation of the rearranged membranous structures where viral replication takes place. Functionally, acts as a primer for viral RNA replication and remains covalently bound to viral genomic RNA. VPg is uridylylated prior to priming replication into VPg-pUpU. The oriI viral genomic sequence may act as a template for this. The VPg-pUpU is then used as primer on the genomic RNA poly(A) by the RNA-dependent RNA polymerase to replicate the viral genome. During genome replication, the VPg-RNA linkage is removed by the host TDP2, thereby accelerating replication. During the late stage of the replication cycle, host TDP2 is excluded from sites of viral RNA synthesis and encapsidation, allowing for the generation of progeny virions. In terms of biological role, involved in the viral replication complex and viral polypeptide maturation. It exhibits protease activity with a specificity and catalytic efficiency that is different from protease 3C. Protein 3CD lacks polymerase activity. Protein 3CD binds to the 5'UTR of the viral genome. Replicates the viral genomic RNA on the surface of intracellular membranes. May form linear arrays of subunits that propagate along a strong head-to-tail interaction called interface-I. Covalently attaches UMP to a tyrosine of VPg, which is used to prime RNA synthesis. The positive stranded RNA genome is first replicated at virus induced membranous vesicles, creating a dsRNA genomic replication form. This dsRNA is then used as template to synthesize positive stranded RNA genomes. ss(+)RNA genomes are either translated, replicated or encapsidated. Its function is as follows. Major viral protease that mediates proteolytic processing of the polyprotein. Cleaves host EIF5B, contributing to host translation shutoff. Also cleaves host PABPC1, contributing to host translation shutoff. Cleaves host NLRP1, triggers host N-glycine-mediated degradation of the autoinhibitory NLRP1 N-terminal fragment. In Sus scrofa (Pig), this protein is Genome polyprotein.